Reading from the N-terminus, the 332-residue chain is MIEYVIPKKLKIEEERSETEYYYARYVLSPMEKGYGTTIGNALRRVLLSSIPSVAIVGIRFIKPEKYHEFDTLPGVKEDILEIILNLKRIQLRADVPVRERVKMTVEKRGPGNLTAADIKVPAGFEIANPSLKIATLDEEADLFFELYAQAGKGFVPAQEMDDHPEIGWIPIDGVFSPVMKVNFRVESARVEKRTDYDKMILEIWTKKTIFPNEALKRAVDILMNHLQIITDSLPEGMPPLTTEFVPISQEEVKVEQTVSEEEAVYSKKIDELELTIRSLNCLRRDKIETIGDLLKRTEEDLLKIKNFGPKSLDEVKQKLLEKFGLSLKKGG.

The interval 1-234 (MIEYVIPKKL…NHLQIITDSL (234 aa)) is alpha N-terminal domain (alpha-NTD). An alpha C-terminal domain (alpha-CTD) region spans residues 264–332 (AVYSKKIDEL…KFGLSLKKGG (69 aa)).

Belongs to the RNA polymerase alpha chain family. In terms of assembly, homodimer. The RNAP catalytic core consists of 2 alpha, 1 beta, 1 beta' and 1 omega subunit. When a sigma factor is associated with the core the holoenzyme is formed, which can initiate transcription.

It carries out the reaction RNA(n) + a ribonucleoside 5'-triphosphate = RNA(n+1) + diphosphate. Its function is as follows. DNA-dependent RNA polymerase catalyzes the transcription of DNA into RNA using the four ribonucleoside triphosphates as substrates. This chain is DNA-directed RNA polymerase subunit alpha, found in Pseudothermotoga lettingae (strain ATCC BAA-301 / DSM 14385 / NBRC 107922 / TMO) (Thermotoga lettingae).